Reading from the N-terminus, the 443-residue chain is Probable glycine dehydrogenase (decarboxylating) subunit 1 (443 aa).

Belongs to the GcvP family. N-terminal subunit subfamily. In terms of assembly, the glycine cleavage system is composed of four proteins: P, T, L and H. In this organism, the P 'protein' is a heterodimer of two subunits.

The catalysed reaction is N(6)-[(R)-lipoyl]-L-lysyl-[glycine-cleavage complex H protein] + glycine + H(+) = N(6)-[(R)-S(8)-aminomethyldihydrolipoyl]-L-lysyl-[glycine-cleavage complex H protein] + CO2. Its function is as follows. The glycine cleavage system catalyzes the degradation of glycine. The P protein binds the alpha-amino group of glycine through its pyridoxal phosphate cofactor; CO(2) is released and the remaining methylamine moiety is then transferred to the lipoamide cofactor of the H protein. The polypeptide is Probable glycine dehydrogenase (decarboxylating) subunit 1 (Solidesulfovibrio magneticus (strain ATCC 700980 / DSM 13731 / RS-1) (Desulfovibrio magneticus)).